A 459-amino-acid polypeptide reads, in one-letter code: Glutamate--tRNA ligase 2 (459 aa).

The 'HIGH' region motif lies at 8–18; that stretch reads PSPTGYIHIGN. The short motif at 249 to 253 is the 'KMSKS' region element; it reads GLSKR. Lysine 252 contacts ATP.

This sequence belongs to the class-I aminoacyl-tRNA synthetase family. Glutamate--tRNA ligase type 1 subfamily. As to quaternary structure, monomer.

It is found in the cytoplasm. It catalyses the reaction tRNA(Glu) + L-glutamate + ATP = L-glutamyl-tRNA(Glu) + AMP + diphosphate. In terms of biological role, catalyzes the attachment of glutamate to tRNA(Glu) in a two-step reaction: glutamate is first activated by ATP to form Glu-AMP and then transferred to the acceptor end of tRNA(Glu). This chain is Glutamate--tRNA ligase 2, found in Bartonella henselae (strain ATCC 49882 / DSM 28221 / CCUG 30454 / Houston 1) (Rochalimaea henselae).